A 316-amino-acid polypeptide reads, in one-letter code: tRNA dimethylallyltransferase (316 aa).

12 to 19 (GPTASGKT) lines the ATP pocket. 14 to 19 (TASGKT) is a binding site for substrate. Interaction with substrate tRNA stretches follow at residues 37–40 (DSAL) and 161–165 (QRILR).

This sequence belongs to the IPP transferase family. In terms of assembly, monomer. Requires Mg(2+) as cofactor.

It carries out the reaction adenosine(37) in tRNA + dimethylallyl diphosphate = N(6)-dimethylallyladenosine(37) in tRNA + diphosphate. Functionally, catalyzes the transfer of a dimethylallyl group onto the adenine at position 37 in tRNAs that read codons beginning with uridine, leading to the formation of N6-(dimethylallyl)adenosine (i(6)A). The protein is tRNA dimethylallyltransferase of Idiomarina loihiensis (strain ATCC BAA-735 / DSM 15497 / L2-TR).